Here is a 389-residue protein sequence, read N- to C-terminus: (+)-bicyclogermacrene synthase TS4 (389 aa).

Positions 136, 140, 284, 288, and 292 each coordinate Mg(2+). Positions 136–140 match the DDxx(x)D/E motif motif; sequence DEVCE. The NDxxSxxxD/E motif motif lies at 284–292; sequence HDFIGLQKD.

This sequence belongs to the terpene synthase family.

It carries out the reaction (2E,6E)-farnesyl diphosphate = bicyclogermacrene + diphosphate. Catalyzes the cyclization of trans,trans-farnesyl diphosphate (FPP) to the bicyclic sesquiterpene bicyclogermacrene. This chain is (+)-bicyclogermacrene synthase TS4, found in Penicillium expansum (Blue mold rot fungus).